Consider the following 259-residue polypeptide: Type III pantothenate kinase (259 aa).

Position 6–13 (6–13 (DIGNTNIT)) interacts with ATP. 113–116 (GADR) serves as a coordination point for substrate. The Proton acceptor role is filled by Asp-115. Residue Asp-135 participates in K(+) binding. Thr-138 contacts ATP. Thr-190 serves as a coordination point for substrate.

The protein belongs to the type III pantothenate kinase family. Homodimer. Requires NH4(+) as cofactor. K(+) serves as cofactor.

The protein localises to the cytoplasm. It catalyses the reaction (R)-pantothenate + ATP = (R)-4'-phosphopantothenate + ADP + H(+). It participates in cofactor biosynthesis; coenzyme A biosynthesis; CoA from (R)-pantothenate: step 1/5. Its function is as follows. Catalyzes the phosphorylation of pantothenate (Pan), the first step in CoA biosynthesis. The polypeptide is Type III pantothenate kinase (Endomicrobium trichonymphae).